A 208-amino-acid chain; its full sequence is Probable very-long-chain (3R)-3-hydroxyacyl-CoA dehydratase (208 aa).

Topologically, residues Met1 to Lys11 are cytoplasmic. The helical transmembrane segment at Leu12–Thr35 threads the bilayer. Topologically, residues Lys36–Asn46 are lumenal. The helical transmembrane segment at Thr47–Leu67 threads the bilayer. Over Val68 to Gln78 the chain is Cytoplasmic. Residues Val79–Ile97 form a helical membrane-spanning segment. At Glu98–Ile102 the chain is on the lumenal side. Residues Tyr103–Phe123 form a helical membrane-spanning segment. Over Asn124–Thr134 the chain is Cytoplasmic. A helical transmembrane segment spans residues Trp135 to Leu157. Residues Tyr145 and Glu152 contribute to the active site. Residues Lys158 to Lys171 lie on the Lumenal side of the membrane. The chain crosses the membrane as a helical span at residues Leu172–Met192. Over Leu193–Thr208 the chain is Cytoplasmic.

It belongs to the very long-chain fatty acids dehydratase HACD family.

It localises to the endoplasmic reticulum membrane. The catalysed reaction is a very-long-chain (3R)-3-hydroxyacyl-CoA = a very-long-chain (2E)-enoyl-CoA + H2O. It functions in the pathway lipid metabolism; fatty acid biosynthesis. Functionally, catalyzes the third of the four reactions of the long-chain fatty acids elongation cycle. This endoplasmic reticulum-bound enzymatic process, allows the addition of two carbons to the chain of long- and very long-chain fatty acids/VLCFAs per cycle. This enzyme catalyzes the dehydration of the 3-hydroxyacyl-CoA intermediate into trans-2,3-enoyl-CoA, within each cycle of fatty acid elongation. Thereby, it participates in the production of VLCFAs of different chain lengths that are involved in multiple biological processes as precursors of membrane lipids and lipid mediators. This is Probable very-long-chain (3R)-3-hydroxyacyl-CoA dehydratase from Schizosaccharomyces pombe (strain 972 / ATCC 24843) (Fission yeast).